Here is a 296-residue protein sequence, read N- to C-terminus: DNA primase small subunit PriS (296 aa).

Active-site residues include aspartate 82, aspartate 84, and aspartate 191.

The protein belongs to the eukaryotic-type primase small subunit family. In terms of assembly, heterodimer of a small subunit (PriS) and a large subunit (PriL). Mg(2+) serves as cofactor. Mn(2+) is required as a cofactor.

In terms of biological role, catalytic subunit of DNA primase, an RNA polymerase that catalyzes the synthesis of short RNA molecules used as primers for DNA polymerase during DNA replication. The small subunit contains the primase catalytic core and has DNA synthesis activity on its own. Binding to the large subunit stabilizes and modulates the activity, increasing the rate of DNA synthesis while decreasing the length of the DNA fragments, and conferring RNA synthesis capability. The DNA polymerase activity may enable DNA primase to also catalyze primer extension after primer synthesis. May also play a role in DNA repair. This chain is DNA primase small subunit PriS, found in Methanopyrus kandleri (strain AV19 / DSM 6324 / JCM 9639 / NBRC 100938).